The sequence spans 382 residues: 3-dehydroquinate synthase (382 aa).

Residues 81–86 (EGEISK), 115–119 (GVVGD), 139–140 (TS), Lys152, and Lys161 each bind NAD(+). Zn(2+)-binding residues include Glu194, His256, and His274.

Belongs to the sugar phosphate cyclases superfamily. Dehydroquinate synthase family. Requires NAD(+) as cofactor. The cofactor is Co(2+). It depends on Zn(2+) as a cofactor.

Its subcellular location is the cytoplasm. It catalyses the reaction 7-phospho-2-dehydro-3-deoxy-D-arabino-heptonate = 3-dehydroquinate + phosphate. The protein operates within metabolic intermediate biosynthesis; chorismate biosynthesis; chorismate from D-erythrose 4-phosphate and phosphoenolpyruvate: step 2/7. Its function is as follows. Catalyzes the conversion of 3-deoxy-D-arabino-heptulosonate 7-phosphate (DAHP) to dehydroquinate (DHQ). In Bradyrhizobium diazoefficiens (strain JCM 10833 / BCRC 13528 / IAM 13628 / NBRC 14792 / USDA 110), this protein is 3-dehydroquinate synthase.